The chain runs to 174 residues: Regulator of G-protein signaling 8 (174 aa).

Positions Ser46–Leu162 constitute an RGS domain.

Its subcellular location is the cell membrane. The protein localises to the membrane. The protein resides in the perikaryon. It is found in the cell projection. It localises to the dendrite. Its subcellular location is the nucleus. Functionally, regulates G protein-coupled receptor signaling cascades, including signaling via muscarinic acetylcholine receptors and dopamine receptors. Inhibits signal transduction by increasing the GTPase activity of G protein alpha subunits, thereby driving them into their inactive GDP-bound form. Modulates the activity of potassium channels that are activated in response to G protein-coupled receptor signaling. The polypeptide is Regulator of G-protein signaling 8 (rgs8) (Danio rerio (Zebrafish)).